Here is a 557-residue protein sequence, read N- to C-terminus: Glutamine--tRNA ligase (557 aa).

A 'HIGH' region motif is present at residues 42 to 52 (PEPNGYLHIGH). ATP is bound by residues 43 to 45 (EPN) and 49 to 55 (HIGHAKS). The L-glutamine site is built by Asp-75 and Tyr-220. ATP is bound by residues Thr-239 and 270 to 271 (RL). The short motif at 277–281 (LTSKR) is the 'KMSKS' region element.

The protein belongs to the class-I aminoacyl-tRNA synthetase family. As to quaternary structure, monomer.

The protein localises to the cytoplasm. The catalysed reaction is tRNA(Gln) + L-glutamine + ATP = L-glutaminyl-tRNA(Gln) + AMP + diphosphate. The polypeptide is Glutamine--tRNA ligase (Haemophilus influenzae (strain 86-028NP)).